We begin with the raw amino-acid sequence, 468 residues long: UDP-glycosyltransferase 89B2 (468 aa).

UDP-alpha-D-glucose is bound by residues S287, 347–348, 365–373, and 387–390; these read WV, HCGWNSVME, and SADQ.

Belongs to the UDP-glycosyltransferase family.

May glycosylate diterpenes or flavonols in leaves. This Stevia rebaudiana (Stevia) protein is UDP-glycosyltransferase 89B2.